We begin with the raw amino-acid sequence, 602 residues long: Zinc finger MYND domain-containing protein 11 (602 aa).

One can recognise an SAMD1-like winged helix (WH) domain in the interval lysine 6–glutamine 82. The PHD-type zinc-finger motif lies at aspartate 100–isoleucine 148. The Bromo domain occupies lysine 149–leucine 255. Cysteine 258, cysteine 261, cysteine 277, and histidine 281 together coordinate Zn(2+). Residues asparagine 280 to asparagine 331 enclose the PWWP domain. Lysine 366 participates in a covalent cross-link: Glycyl lysine isopeptide (Lys-Gly) (interchain with G-Cter in SUMO2). The interval lysine 366–asparagine 459 is disordered. The short motif at arginine 394–arginine 400 is the Nuclear localization signal element. Residues lysine 407 and lysine 408 each participate in a glycyl lysine isopeptide (Lys-Gly) (interchain with G-Cter in SUMO2) cross-link. A Phosphoserine modification is found at serine 421. A compositionally biased stretch (polar residues) spans serine 435–asparagine 459. The interaction with human adenovirus E1A stretch occupies residues histidine 452–tyrosine 572. Zn(2+) contacts are provided by cysteine 563, cysteine 566, cysteine 574, cysteine 575, cysteine 581, cysteine 585, histidine 594, and cysteine 598. The MYND-type zinc finger occupies cysteine 563 to cysteine 598.

Homooligomer; forms homooligomers via its C-terminus. Interacts with histone H3.3 trimethylated at 'Lys-36' (H3.3K36me3). Interacts (via MYND-type zinc finger) with NCOR1. Interacts (via MYND-type zinc finger) with MGA protein (via PXLXP motif). Interacts (via MYND-type zinc finger) with EZH2. Interacts with EMSY and E2F6. Interacts with PIAS1 and UBE2I. In terms of assembly, (Microbial infection) Interacts (via MYND-type zinc finger) with human adenovirus early E1A protein (via PXLXP motif); this interaction inhibits E1A mediated transactivation. As to quaternary structure, (Microbial infection) Interacts (via MYND-type zinc finger) with Epstein-Barr virus EBNA2 protein (via PXLXP motif). Interacts with Epstein-Barr virus-derived protein LMP1; leading to negatively regulate NF-kappa-B activation by Epstein-Barr virus-derived protein LMP1. In terms of processing, sumoylated following its interaction with PIAS1 and UBE2I. Post-translationally, ubiquitinated, leading to proteasomal degradation. Ubiquitous.

It is found in the nucleus. The protein resides in the chromosome. Functionally, chromatin reader that specifically recognizes and binds histone H3.3 trimethylated at 'Lys-36' (H3.3K36me3) and regulates RNA polymerase II elongation. Does not bind other histone H3 subtypes (H3.1 or H3.2). Colocalizes with highly expressed genes and functions as a transcription corepressor by modulating RNA polymerase II at the elongation stage. Binds non-specifically to dsDNA. Acts as a tumor-suppressor by repressing a transcriptional program essential for tumor cell growth. (Microbial infection) Inhibits Epstein-Barr virus EBNA2-mediated transcriptional activation and host cell proliferation, through direct interaction. In Homo sapiens (Human), this protein is Zinc finger MYND domain-containing protein 11.